The primary structure comprises 2079 residues: Protein xmas (2079 aa).

Positions 12–83 constitute an RRM domain; sequence KTLLCRNIPE…HLFDISYADN (72 aa). Positions 112–152 are disordered; sequence NEYGSGKPIKKPQNGSSGSGGSSMLPAIPVGPATAPVSRDR. One can recognise a PCI domain in the interval 342 to 525; sequence DSKINAENLT…ETEYKLPRQY (184 aa). The segment at 835-1359 is sufficient for Orc3 binding; sequence PLSFGAENPE…RRDASDHKHA (525 aa). 4 disordered regions span residues 1335 to 1360, 1755 to 1778, 1930 to 1963, and 2032 to 2079; these read RHTL…KHAM, AEET…SKRA, KAQA…TSKA, and SAAA…TGKL. A compositionally biased stretch (basic residues) spans 1764-1776; that stretch reads HHRHHGGGQKMSK. Positions 2048-2059 are enriched in low complexity; sequence PVVSPKVQVPSV. Polar residues predominate over residues 2070–2079; the sequence is GPQTTKTGKL.

It belongs to the SAC3 family. In terms of assembly, component of the nuclear pore complex (NPC)-associated TREX-2/AMEX complex (anchoring and mRNA export complex), composed of e(y)2, xmas and PCID2. Within the TREX-2/ AMEX complex, interactions with e(y)2 is required for localization of e(y)2 to the nuclear periphery. Interaction between the TREX-2/AMEX complex and the ORC complex is required for ORC localization to mRNPs, and consequently mRNA export. Within the TREX-2/AMEX-ORC complex, interacts with Orc6, (via C-terminus) with Orc3, and weakly interacts with Orc4. However, another report found that the interaction with Orc3 is not direct, instead it is mediated via e(y)2. Interacts with piwi. As to expression, expressed in ovaries (at protein level). Detected in the testes and ovaries, with expression levels higher in oocytes than in testicular cells (at protein level). In terms of tissue distribution, detected in the testes and ovaries (at protein level). As to expression, detected in the testes.

It is found in the nucleus. The protein resides in the nucleoplasm. The protein localises to the nucleus membrane. Its subcellular location is the cytoplasm. Functionally, involved in mRNA export and mRNA coupled transcription activation. Component of the nuclear pore complex (NPC)-associated TREX-2/AMEX complex (anchoring and mRNA export complex) which functions in docking export-competent ribonucleoprotein particles (mRNPs) to the nuclear entrance of the nuclear pore complex (nuclear basket), thereby enabling the export of mRNAs to the cytoplasm through the nuclear pores. The TREX-2/AMEX complex also functions with the transcriptional coactivator SAGA/TFTC complex, to anchor a subset of transcription sites to the nuclear pore complex basket in order to achieve efficient transcription and export of their resulting mRNAs. Within the complex, required for localization of e(y)2 to the nuclear periphery. The chain is Protein xmas from Drosophila melanogaster (Fruit fly).